Reading from the N-terminus, the 701-residue chain is Elongation factor G 1 (701 aa).

Residues 8–290 form the tr-type G domain; that stretch reads ERYRNIGISA…AVIDYLPSPL (283 aa). GTP-binding positions include 17 to 24, 88 to 92, and 142 to 145; these read AHIDAGKT, DTPGH, and NKMD.

Belongs to the TRAFAC class translation factor GTPase superfamily. Classic translation factor GTPase family. EF-G/EF-2 subfamily.

It is found in the cytoplasm. Functionally, catalyzes the GTP-dependent ribosomal translocation step during translation elongation. During this step, the ribosome changes from the pre-translocational (PRE) to the post-translocational (POST) state as the newly formed A-site-bound peptidyl-tRNA and P-site-bound deacylated tRNA move to the P and E sites, respectively. Catalyzes the coordinated movement of the two tRNA molecules, the mRNA and conformational changes in the ribosome. This Paraburkholderia xenovorans (strain LB400) protein is Elongation factor G 1.